The following is a 275-amino-acid chain: UBX domain-containing protein 8 (275 aa).

M1 is a topological domain (cytoplasmic). Residues A2 to L22 form a helical membrane-spanning segment. Topologically, residues R23–D33 are lumenal. A helical transmembrane segment spans residues L34–V54. The Cytoplasmic segment spans residues T55–S275. Positions D137 to E181 are disordered. Residues T192 to V268 enclose the UBX domain.

In terms of assembly, interacts with SYVN1 and VCP.

The protein localises to the endoplasmic reticulum membrane. Involved in endoplasmic reticulum-associated degradation (ERAD) for misfolded lumenal proteins, possibly by tethering VCP to the endoplasmic reticulum membrane. May play a role in reproduction. Functionally, may play a role in reproduction. In Bos taurus (Bovine), this protein is UBX domain-containing protein 8 (UBXN8).